The sequence spans 461 residues: Steroidogenic factor 1 (461 aa).

The nuclear receptor DNA-binding region spans 10 to 85; sequence DELCPVCGDK…VGMRLEAVRA (76 aa). The NR C4-type zinc-finger motif lies at 13–33; it reads CPVCGDKVSGYHYGLLTCESC. Residues K34, K38, and K72 each carry the N6-acetyllysine modification. An NR C4-type zinc finger spans residues 49-73; that stretch reads CTESQSCKIDKTQRKRCPFCRFQKC. Residue K119 forms a Glycyl lysine isopeptide (Lys-Gly) (interchain with G-Cter in SUMO) linkage. A disordered region spans residues 119 to 150; it reads KLETGPPMGVAPPPPPPPDYMLPPGLHAPEPK. The span at 127 to 139 shows a compositional bias: pro residues; that stretch reads GVAPPPPPPPDYM. A Glycyl lysine isopeptide (Lys-Gly) (interchain with G-Cter in SUMO) cross-link involves residue K194. At S203 the chain carries Phosphoserine; by CDK7. One can recognise an NR LBD domain in the interval 222 to 459; sequence GVPELIVQLL…NLLIEMLQAK (238 aa). Residues 230-461 form an important for dimerization region; sequence LLQLEPDEDQ…LIEMLQAKQT (232 aa). Residues G341, Y436, and K440 each contribute to the a 1,2-diacyl-sn-glycero-3-phosphocholine site.

This sequence belongs to the nuclear hormone receptor family. NR5 subfamily. Binds DNA as a monomer. Part of a complex consisting of SFPQ, NONO and NR5A1. Interacts with NR0B2, NCOA2 and PPARGC1A. Interacts with DGKQ and CDK7. Binds to and activated by HIPK3. Post-translationally, acetylation stimulates the transcriptional activity. Sumoylation reduces CDK7-mediated phosphorylation on Ser-203. In terms of processing, phosphorylated on Ser-203 by CDK7. This phosphorylation promotes transcriptional activity.

It is found in the nucleus. Its function is as follows. Transcriptional activator. Seems to be essential for sexual differentiation and formation of the primary steroidogenic tissues. Binds to the Ad4 site found in the promoter region of steroidogenic P450 genes such as CYP11A, CYP11B and CYP21B. Also regulates the AMH/Muellerian inhibiting substance gene as well as the AHCH and STAR genes. 5'-YCAAGGYC-3' and 5'-RRAGGTCA-3' are the consensus sequences for the recognition by NR5A1. The SFPQ-NONO-NR5A1 complex binds to the CYP17 promoter and regulates basal and cAMP-dependent transcriptional activity. Binds phosphatidylcholine and phospholipids with a phosphatidylinositol (PI) headgroup, in particular PI(3,4)P2 and PI(3,4,5)P3. Activated by the phosphorylation of NR5A1 by HIPK3 leading to increased steroidogenic gene expression upon cAMP signaling pathway stimulation. The chain is Steroidogenic factor 1 (NR5A1) from Sus scrofa (Pig).